Consider the following 1135-residue polypeptide: MTQLLRFLLILSIFCDFSHSQRPTIRVGIAAALKTQNGSIGWAYAGGAVPLALQYLKSHGFVKDFDFEFHVEYTECDLTETVRAGLDFMKTKNYDVIIGPPCATPLIAMGTLSTVYKKPVLGWGFVSESEFSDMERFPYLTSVLPSSMTLGTVTSALLELYGWDRIALVYFKNELNYCSGVIEDVETSLYDENYSQMVQVVIKEEVDQNNTENFVATLQMIKARARIIIFCAQTGAEKRFYMIQAGKQGMNTSEYVHVMLSMRSVGFGVQSAVGKKPLNSGLAPIWEAFQVAPDGLEDLAKSVASKMLVIDLSSDIRDKEFLQYMTKNIVYAIREPPLSCMAPECLAANATGMGAYARHLFDVFYMYGMALTNLNSTDPNIYGNVDLLVSKFTTPFEGMTGQVQLNSELSRLPLYQVYALNKEYDQISIMNISLINGTAKVSLAYQNESSDVWHFWGSTRPLDTPICGFLGKSCPIPFFDQYRLLIFVFVIVAGLLILAIFTCLTSMVRNQRAEQSRLNSEWQIHAIKLRIPEKKGRRLSTDSENSTVTKSSKGSSSKNFETSEFNENYEIQFLENDLVLTTAHQVQELSNLDKMRLVKLRKLDHENLNKFIGLSIDGSRYLAVWKMCTRGSIQDIMSRGNFSMDYFFMFCMIRDIAEGLNFLHKSFLRLHGNLRSATCLVNDSWQVKLAEFGLEFLQDDEERPTQKRLLWAAPEVLRGSLTVSQMDPSADVYSFAIVASEILTKKEAWDLHKRKEGYEGKRGNSKIEIIYNVKKGGPHPFRPTLLTDSDVNKSLLALVKDCWSENPEARPNTENICKIILDMTPRTKDNLMDHVFSMLEEYTQTLEVEVDERTKELVLEKKKSDILLGRMLPKQVAERLKAGQAVEPESFDLVTVFFSDLVKFTELANKCSPFQVVNLLNEVFSNFDAIIEKHDVYKVESIGDGFLCVSGLPNRNGVEHIRQIVEMALGFLEFCDKFRIPHLPRERVELRVGVNSGSCVAGVVGLSMPRYCLFGDTVNTASRMESNGKASLIHMSEIAHAFLVDHFPYQYETNSRGEVIIKGKGVMETFWLLGRISMSNRSTPPVAQLKQLPQKCSSFTDTGTIRSVSPYIENASDSEDEELRRVMRREMMRVS.

A signal peptide spans 1–20; it reads MTQLLRFLLILSIFCDFSHS. Over 21-483 the chain is Extracellular; it reads QRPTIRVGIA…CPIPFFDQYR (463 aa). Residues N37, N193, N209, N251, N349, N375, N431, N436, and N447 are each glycosylated (N-linked (GlcNAc...) asparagine). Residues 484–504 form a helical membrane-spanning segment; that stretch reads LLIFVFVIVAGLLILAIFTCL. The Cytoplasmic segment spans residues 505–1135; it reads TSMVRNQRAE…VMRREMMRVS (631 aa). Positions 535-560 are disordered; it reads KGRRLSTDSENSTVTKSSKGSSSKNF. A Protein kinase domain is found at 545 to 837; that stretch reads NSTVTKSSKG…KDNLMDHVFS (293 aa). Over residues 546 to 560 the composition is skewed to low complexity; the sequence is STVTKSSKGSSSKNF. One can recognise a Guanylate cyclase domain in the interval 895–1025; the sequence is TVFFSDLVKF…DTVNTASRME (131 aa).

Belongs to the adenylyl cyclase class-4/guanylyl cyclase family. Expressed bilaterally in ASE neurons.

It is found in the cell membrane. The catalysed reaction is GTP = 3',5'-cyclic GMP + diphosphate. Functionally, guanylate cyclase involved in the production of the second messenger cGMP. Regulates chemotaxis responses toward salt ions in ASE sensory neurons. This is Receptor-type guanylate cyclase gcy-4 from Caenorhabditis briggsae.